We begin with the raw amino-acid sequence, 381 residues long: Arrestin homolog (381 aa).

It belongs to the arrestin family.

The sequence is that of Arrestin homolog from Heliothis virescens (Tobacco budworm moth).